The sequence spans 816 residues: Phosphatidylinositol 4-kinase beta (816 aa).

Disordered regions lie at residues 1–29, 99–121, and 250–318; these read MGDM…GGSL, EEED…RRRQ, and RKRE…SFSS. Gly2 is modified (N-acetylglycine). Residues 2–68 form an interaction with ACBD3 region; the sequence is GDMVVEPATL…VKLLHGGVAI (67 aa). A compositionally biased stretch (low complexity) spans 10-29; that stretch reads TLKPTSEPTPSPSGNNGGSL. The 182-residue stretch at 61–242 folds into the PIK helical domain; sequence LLHGGVAISS…GTKLRKLILS (182 aa). Ser258 carries the phosphoserine modification. Position 263 is a phosphothreonine (Thr263). Phosphoserine occurs at positions 266, 275, 277, 284, and 294. Polar residues-rich tracts occupy residues 278–297 and 306–318; these read DATA…SNPK and SSST…SFSS. Position 428 is a phosphoserine (Ser428). Thr438 bears the Phosphothreonine mark. Position 511 is a phosphoserine (Ser511). 2 positions are modified to phosphothreonine: Thr517 and Thr519. Positions 535–801 constitute a PI3K/PI4K catalytic domain; that stretch reads EPWQEKVRRI…MVDGSMRSIT (267 aa). A G-loop region spans residues 541 to 547; sequence VRRIREG. The tract at residues 668–676 is catalytic loop; it reads QVKDRHNGN. The segment at 687 to 711 is activation loop; the sequence is HIDFGFILSSSPRNLGFETSAFKLT.

This sequence belongs to the PI3/PI4-kinase family. Type III PI4K subfamily. In terms of assembly, interacts with ARF1 and ARF3 in the Golgi complex, but not with ARF4, ARF5 or ARF6. Interacts with NCS1/FREQ in a calcium-independent manner. Interacts with CALN1/CABP8 and CALN2/CABP7; in a calcium-dependent manner; this interaction competes with NCS1/FREQ binding. Interacts with ACBD3. Interacts with ARMH3, YWHAB, YWHAE, YWHAG, YWHAH, YWHAQ, YWHAZ and SFN. Interacts with GGA2 (via VHS domain); the interaction is important for PI4KB location at the Golgi apparatus membrane. Interacts with ATG9A. Requires Mg(2+) as cofactor. Mn(2+) is required as a cofactor. Strongly expressed in brain, kidney, lung, small intestine, uterus and adrenal gland. Weaker expression in liver, heart, skeletal muscle, thymus and testis. Not detected in spleen.

Its subcellular location is the golgi apparatus. The protein localises to the endomembrane system. The protein resides in the mitochondrion outer membrane. It localises to the rough endoplasmic reticulum membrane. It is found in the golgi apparatus membrane. It carries out the reaction a 1,2-diacyl-sn-glycero-3-phospho-(1D-myo-inositol) + ATP = a 1,2-diacyl-sn-glycero-3-phospho-(1D-myo-inositol 4-phosphate) + ADP + H(+). With respect to regulation, inhibited by wortmannin. Increased kinase activity upon interaction with NCS1/FREQ. Phosphorylates phosphatidylinositol (PI) in the first committed step in the production of the second messenger inositol-1,4,5,-trisphosphate (PIP). May regulate Golgi disintegration/reorganization during mitosis, possibly via its phosphorylation. Involved in Golgi-to-plasma membrane trafficking. May play an important role in the inner ear development. In Rattus norvegicus (Rat), this protein is Phosphatidylinositol 4-kinase beta (Pi4kb).